Consider the following 353-residue polypeptide: Interferon-stimulated 20 kDa exonuclease-like 2 (353 aa).

Disordered stretches follow at residues 1-93 (MSTL…QPLD) and 125-172 (ALPK…SGAS). The span at 14–23 (PPKKALEGNA) shows a compositional bias: basic and acidic residues. Residues 24–35 (KHRNFVKKRRLL) show a composition bias toward basic residues. Over residues 54-63 (LHSEPSKKGE) the composition is skewed to basic and acidic residues. Residues 135 to 151 (RSQKKSSQKKSSKKNHP) show a composition bias toward basic residues. Residues 152–172 (QKNAPQNSTQAHSENKCSGAS) show a composition bias toward polar residues. The 176-residue stretch at 178 to 353 (KMVAIDCEMV…EHLARNPPTD (176 aa)) folds into the Exonuclease domain.

The protein resides in the nucleus. The protein localises to the nucleolus. 3'-&gt; 5'-exoribonuclease involved in ribosome biogenesis in the processing of the 12S pre-rRNA. Displays a strong specificity for a 3'-end containing a free hydroxyl group. This is Interferon-stimulated 20 kDa exonuclease-like 2 (ISG20L2) from Homo sapiens (Human).